A 249-amino-acid polypeptide reads, in one-letter code: tRNA (guanine-N(1)-)-methyltransferase (249 aa).

S-adenosyl-L-methionine-binding positions include glycine 118 and 138–143 (IGDYVL).

The protein belongs to the RNA methyltransferase TrmD family. Homodimer.

It localises to the cytoplasm. The enzyme catalyses guanosine(37) in tRNA + S-adenosyl-L-methionine = N(1)-methylguanosine(37) in tRNA + S-adenosyl-L-homocysteine + H(+). Functionally, specifically methylates guanosine-37 in various tRNAs. The protein is tRNA (guanine-N(1)-)-methyltransferase of Alkaliphilus oremlandii (strain OhILAs) (Clostridium oremlandii (strain OhILAs)).